Reading from the N-terminus, the 218-residue chain is MNSVTVSHAPYTITYHDDWEPVMNQLVEFYNEVASWLLRDETSPIPDKFFIQLKQPLRNKRVCVCGIDPYPKDGTGVPFESPNFTKKSIKEIASSISRLTGVIDYKGYNLNIIDGVIPWNYYLSCKLGETKSHAIYWDKISKLLLHHITKHVRFLYCLGKTDFSNIRAKLESPVTTIVGYHPAARDRQFEKDRSFEIINVLLELDNKAPINWAQGFIY.

Aspartate 68 serves as the catalytic Proton acceptor.

Belongs to the uracil-DNA glycosylase (UDG) superfamily. UNG family. Homodimer. Interacts with protein OPG148. Component of the Uracil-DNA glycosylase(UDG)-OPG148-polymerase complex; OPG148 and UDG form a heterodimeric processivity factor that associates with OPG71 to form the processive polymerase holoenzyme.

It carries out the reaction Hydrolyzes single-stranded DNA or mismatched double-stranded DNA and polynucleotides, releasing free uracil.. Plays an essential role in viral replication as a component of the DNA polymerase processivity factor. Excises uracil residues from the DNA which can arise as a result of misincorporation of dUMP residues by DNA polymerase or due to deamination of cytosine. In Homo sapiens (Human), this protein is Uracil-DNA glycosylase (OPG116).